The primary structure comprises 413 residues: Serine hydroxymethyltransferase (413 aa).

(6S)-5,6,7,8-tetrahydrofolate-binding positions include L119 and G123 to L125. An N6-(pyridoxal phosphate)lysine modification is found at K228.

This sequence belongs to the SHMT family. In terms of assembly, homodimer. It depends on pyridoxal 5'-phosphate as a cofactor.

It is found in the cytoplasm. It catalyses the reaction (6R)-5,10-methylene-5,6,7,8-tetrahydrofolate + glycine + H2O = (6S)-5,6,7,8-tetrahydrofolate + L-serine. Its pathway is one-carbon metabolism; tetrahydrofolate interconversion. It functions in the pathway amino-acid biosynthesis; glycine biosynthesis; glycine from L-serine: step 1/1. Catalyzes the reversible interconversion of serine and glycine with tetrahydrofolate (THF) serving as the one-carbon carrier. This reaction serves as the major source of one-carbon groups required for the biosynthesis of purines, thymidylate, methionine, and other important biomolecules. Also exhibits THF-independent aldolase activity toward beta-hydroxyamino acids, producing glycine and aldehydes, via a retro-aldol mechanism. This Desulfatibacillum aliphaticivorans protein is Serine hydroxymethyltransferase.